The primary structure comprises 252 residues: Imidazole glycerol phosphate synthase subunit HisF (252 aa).

Catalysis depends on residues Asp-11 and Asp-130.

This sequence belongs to the HisA/HisF family. In terms of assembly, heterodimer of HisH and HisF.

The protein resides in the cytoplasm. The catalysed reaction is 5-[(5-phospho-1-deoxy-D-ribulos-1-ylimino)methylamino]-1-(5-phospho-beta-D-ribosyl)imidazole-4-carboxamide + L-glutamine = D-erythro-1-(imidazol-4-yl)glycerol 3-phosphate + 5-amino-1-(5-phospho-beta-D-ribosyl)imidazole-4-carboxamide + L-glutamate + H(+). It functions in the pathway amino-acid biosynthesis; L-histidine biosynthesis; L-histidine from 5-phospho-alpha-D-ribose 1-diphosphate: step 5/9. In terms of biological role, IGPS catalyzes the conversion of PRFAR and glutamine to IGP, AICAR and glutamate. The HisF subunit catalyzes the cyclization activity that produces IGP and AICAR from PRFAR using the ammonia provided by the HisH subunit. In Desulforudis audaxviator (strain MP104C), this protein is Imidazole glycerol phosphate synthase subunit HisF.